Here is a 348-residue protein sequence, read N- to C-terminus: Putative S-adenosyl-L-methionine-dependent methyltransferase Mb3432 (348 aa).

S-adenosyl-L-methionine-binding positions include Asp-171 and 200–201 (DL).

The protein belongs to the UPF0677 family.

In terms of biological role, exhibits S-adenosyl-L-methionine-dependent methyltransferase activity. This chain is Putative S-adenosyl-L-methionine-dependent methyltransferase Mb3432, found in Mycobacterium bovis (strain ATCC BAA-935 / AF2122/97).